The sequence spans 590 residues: Aspartate--tRNA ligase (590 aa).

Glu-180 contributes to the L-aspartate binding site. An aspartate region spans residues 204-207 (QLFK). Residue Arg-226 coordinates L-aspartate. ATP contacts are provided by residues 226–228 (RDE) and Gln-235. Residue His-454 coordinates L-aspartate. Residue Glu-488 coordinates ATP. Arg-495 is a binding site for L-aspartate. 540-543 (GFDR) provides a ligand contact to ATP.

This sequence belongs to the class-II aminoacyl-tRNA synthetase family. Type 1 subfamily. Homodimer.

The protein localises to the cytoplasm. It catalyses the reaction tRNA(Asp) + L-aspartate + ATP = L-aspartyl-tRNA(Asp) + AMP + diphosphate. Its function is as follows. Catalyzes the attachment of L-aspartate to tRNA(Asp) in a two-step reaction: L-aspartate is first activated by ATP to form Asp-AMP and then transferred to the acceptor end of tRNA(Asp). The protein is Aspartate--tRNA ligase of Clostridium kluyveri (strain NBRC 12016).